The chain runs to 65 residues: Large ribosomal subunit protein bL35 (65 aa).

It belongs to the bacterial ribosomal protein bL35 family.

The chain is Large ribosomal subunit protein bL35 from Burkholderia ambifaria (strain MC40-6).